The primary structure comprises 380 residues: MKYSSEFRDKTIAQGLARAIDAEVSSQRAYRFVEFCGGHTHAISRYGLEDLLPANVRMIHGPGCPVCVLPASRIDMAIRLAERPEVILCVYGDLMRAPGSQGQSLLLAKALGAHIRMVYSTLDAIRLAEQTPGREVVFFAIGFETTTPPTAVMIRIAEHKRLEGLSVFCNHVLTPSAMHRILENPKIRNTGGVPIDGFIGPAHVSTIVGTQPYEPMAEQFEKPIVVAGFEPLDVLQAVLMLVRQVNQNRHEVENQYSRAVTREGNRRAKEEVSQVFELREQFEWRGLGLVPNSGLKLKQSYAKFDAETRFAIHDLRVADNPACECCAILRGAKRPIDCKLFGNICTPETPIGACMVSSEGACAAYWTYRRVRDEQARQTS.

Cys-36, Cys-64, and Cys-67 together coordinate Fe cation.

This sequence belongs to the HypD family. [4Fe-4S] cluster is required as a cofactor.

The protein operates within protein modification; [NiFe] hydrogenase maturation. Functionally, involved in the maturation of [NiFe] hydrogenases. Involved in the biosynthesis of the Fe(CN)(2)CO cofactor. The protein is Hydrogenase maturation factor HypD1 (hypD1) of Bradyrhizobium diazoefficiens (strain JCM 10833 / BCRC 13528 / IAM 13628 / NBRC 14792 / USDA 110).